Here is a 357-residue protein sequence, read N- to C-terminus: Trans-resveratrol di-O-methyltransferase (357 aa).

Positions 200, 223, 243, 244, and 257 each coordinate S-adenosyl-L-methionine. The active-site Proton acceptor is H261.

Belongs to the class I-like SAM-binding methyltransferase superfamily. Cation-independent O-methyltransferase family. COMT subfamily.

The catalysed reaction is trans-resveratrol + 2 S-adenosyl-L-methionine = pterostilbene + 2 S-adenosyl-L-homocysteine + 2 H(+). Its function is as follows. Catalyzes the biosynthesis of pterostilbene from resveratrol. Pterostilbene has both antifungal and pharmacological properties. Also has activity toward resveratrol monomethyl ether (RME). The protein is Trans-resveratrol di-O-methyltransferase (ROMT) of Vitis vinifera (Grape).